The following is a 266-amino-acid chain: tRNA pseudouridine synthase A (266 aa).

Residue Asp-53 is the Nucleophile of the active site. Residue Tyr-109 participates in substrate binding.

Belongs to the tRNA pseudouridine synthase TruA family.

The catalysed reaction is uridine(38/39/40) in tRNA = pseudouridine(38/39/40) in tRNA. Its function is as follows. Formation of pseudouridine at positions 38, 39 and 40 in the anticodon stem and loop of transfer RNAs. This chain is tRNA pseudouridine synthase A, found in Methanocella arvoryzae (strain DSM 22066 / NBRC 105507 / MRE50).